We begin with the raw amino-acid sequence, 357 residues long: Uroporphyrinogen decarboxylase (357 aa).

Substrate is bound by residues 27-31, aspartate 77, tyrosine 154, threonine 209, and histidine 327; that span reads RQAGR.

The protein belongs to the uroporphyrinogen decarboxylase family. In terms of assembly, homodimer.

The protein localises to the cytoplasm. It catalyses the reaction uroporphyrinogen III + 4 H(+) = coproporphyrinogen III + 4 CO2. Its pathway is porphyrin-containing compound metabolism; protoporphyrin-IX biosynthesis; coproporphyrinogen-III from 5-aminolevulinate: step 4/4. In terms of biological role, catalyzes the decarboxylation of four acetate groups of uroporphyrinogen-III to yield coproporphyrinogen-III. The protein is Uroporphyrinogen decarboxylase of Nitrosococcus oceani (strain ATCC 19707 / BCRC 17464 / JCM 30415 / NCIMB 11848 / C-107).